We begin with the raw amino-acid sequence, 92 residues long: DNA-binding protein HU (92 aa).

The disordered stretch occupies residues 58–92 (AGTARNPRTGETVNRPASKTARFQVGEGLKSSLNS).

The protein belongs to the bacterial histone-like protein family. Homodimer.

Functionally, histone-like DNA-binding protein which is capable of wrapping DNA to stabilize it, and thus to prevent its denaturation under extreme environmental conditions. The sequence is that of DNA-binding protein HU (hup) from Caulobacter vibrioides (strain ATCC 19089 / CIP 103742 / CB 15) (Caulobacter crescentus).